We begin with the raw amino-acid sequence, 607 residues long: Methylmalonate-semialdehyde dehydrogenase [acylating], mitochondrial (607 aa).

Positions 1-69 are disordered; that stretch reads MVRVKQKNLE…KLRSSSSTTT (69 aa). A mitochondrion-targeting transit peptide spans 1–98; it reads MVRVKQKNLE…QFLALRSSWL (98 aa). A compositionally biased stretch (polar residues) spans 9-30; the sequence is LESYRSNGTYPPTWRNPTTSFA. Over residues 42–51 the composition is skewed to basic residues; the sequence is LKSKTKRRRL. F259, K283, E286, K287, and S336 together coordinate NAD(+). C391 serves as the catalytic Nucleophile. E491 serves as a coordination point for NAD(+).

The protein belongs to the aldehyde dehydrogenase family.

It localises to the mitochondrion. The enzyme catalyses 2-methyl-3-oxopropanoate + NAD(+) + CoA + H2O = propanoyl-CoA + hydrogencarbonate + NADH + H(+). The protein is Methylmalonate-semialdehyde dehydrogenase [acylating], mitochondrial (ALDH6B2) of Arabidopsis thaliana (Mouse-ear cress).